A 182-amino-acid polypeptide reads, in one-letter code: HGPRTase-like protein 1 (182 aa).

It belongs to the purine/pyrimidine phosphoribosyltransferase family. Archaeal HPRT subfamily.

In terms of biological role, may catalyze a purine salvage reaction, the substrate is unknown. The protein is HGPRTase-like protein 1 of Haloarcula marismortui (strain ATCC 43049 / DSM 3752 / JCM 8966 / VKM B-1809) (Halobacterium marismortui).